Here is a 273-residue protein sequence, read N- to C-terminus: F-actin-capping protein subunit alpha (273 aa).

It belongs to the F-actin-capping protein alpha subunit family. As to quaternary structure, heterodimer of an alpha and a beta subunit.

Its subcellular location is the cytoplasm. It is found in the cytoskeleton. F-actin-capping proteins bind in a Ca(2+)-independent manner to the fast growing ends of actin filaments (barbed end) thereby blocking the exchange of subunits at these ends. Unlike other capping proteins (such as gelsolin and severin), these proteins do not sever actin filaments. This Gibberella zeae (strain ATCC MYA-4620 / CBS 123657 / FGSC 9075 / NRRL 31084 / PH-1) (Wheat head blight fungus) protein is F-actin-capping protein subunit alpha (CAP1).